Reading from the N-terminus, the 471-residue chain is Glutamate--tRNA ligase (471 aa).

Residues 9–19 carry the 'HIGH' region motif; sequence PSPTGYLHVGG. Residues Cys-98, Cys-100, Cys-125, and His-127 each coordinate Zn(2+). The 'KMSKS' region signature appears at 237-241; the sequence is KLSKR. ATP is bound at residue Lys-240.

The protein belongs to the class-I aminoacyl-tRNA synthetase family. Glutamate--tRNA ligase type 1 subfamily. As to quaternary structure, monomer. Requires Zn(2+) as cofactor.

It is found in the cytoplasm. The catalysed reaction is tRNA(Glu) + L-glutamate + ATP = L-glutamyl-tRNA(Glu) + AMP + diphosphate. In terms of biological role, catalyzes the attachment of glutamate to tRNA(Glu) in a two-step reaction: glutamate is first activated by ATP to form Glu-AMP and then transferred to the acceptor end of tRNA(Glu). The polypeptide is Glutamate--tRNA ligase (Escherichia coli O9:H4 (strain HS)).